We begin with the raw amino-acid sequence, 454 residues long: Methylenetetrahydrofolate--tRNA-(uracil-5-)-methyltransferase TrmFO (454 aa).

9–14 (GAGLAG) serves as a coordination point for FAD. The tract at residues 432-454 (LERVSPPSRETGEPTGAEQVDLA) is disordered.

It belongs to the MnmG family. TrmFO subfamily. It depends on FAD as a cofactor.

The protein localises to the cytoplasm. The enzyme catalyses uridine(54) in tRNA + (6R)-5,10-methylene-5,6,7,8-tetrahydrofolate + NADH + H(+) = 5-methyluridine(54) in tRNA + (6S)-5,6,7,8-tetrahydrofolate + NAD(+). It catalyses the reaction uridine(54) in tRNA + (6R)-5,10-methylene-5,6,7,8-tetrahydrofolate + NADPH + H(+) = 5-methyluridine(54) in tRNA + (6S)-5,6,7,8-tetrahydrofolate + NADP(+). Functionally, catalyzes the folate-dependent formation of 5-methyl-uridine at position 54 (M-5-U54) in all tRNAs. This chain is Methylenetetrahydrofolate--tRNA-(uracil-5-)-methyltransferase TrmFO, found in Pelobacter propionicus (strain DSM 2379 / NBRC 103807 / OttBd1).